The following is a 116-amino-acid chain: Large ribosomal subunit protein bL17 (116 aa).

It belongs to the bacterial ribosomal protein bL17 family. Part of the 50S ribosomal subunit. Contacts protein L32.

The protein is Large ribosomal subunit protein bL17 of Helicobacter pylori (strain J99 / ATCC 700824) (Campylobacter pylori J99).